The sequence spans 661 residues: Pumilio domain-containing protein C56F2.08c (661 aa).

The region spanning 1-74 (MLYVSNLPVG…GPVQVMLAKP (74 aa)) is the RRM domain. At Ser102 the chain carries Phosphoserine. At Thr104 the chain carries Phosphothreonine. Ser105 is subject to Phosphoserine. The PUM-HD domain occupies 129 to 482 (INLDIVDSMI…RLMEEVGMTS (354 aa)). 4 Pumilio repeats span residues 191–226 (SMLD…AMLE), 227–263 (RIAP…LIVK), 264–302 (HLRP…VMAR), and 374–410 (HLAT…LLLK). A phosphoserine mark is found at Ser482, Ser486, Ser488, and Ser490.

It is found in the cytoplasm. This chain is Pumilio domain-containing protein C56F2.08c, found in Schizosaccharomyces pombe (strain 972 / ATCC 24843) (Fission yeast).